We begin with the raw amino-acid sequence, 288 residues long: MAAKIIDGKTIAQQVRSEVAQKVQARIAAGLRAPGLAVVLVGSNPASQIYVASKRKACEEVGFVSRSYDLPETTSEAELLELIDTLNADNTIDGILVQLPLPAGIDNVKVLERIHPDKDVDGFHPYNVGRLCQRAPRLRPCTPRGIVTLLERYNIDTFGLNAVVIGASNIVGRPMSMELLLAGCTTTVTHRFTKNLRHHVENADLLIVAVGKPGFIPGDWIKEGAIVIDVGINRLENGKVVGDVVFEDAAKRASYITPVPGGVGPMTVATLIENTLQACVEYHDPQGE.

Residues 166–168 (GAS) and isoleucine 232 each bind NADP(+).

This sequence belongs to the tetrahydrofolate dehydrogenase/cyclohydrolase family. As to quaternary structure, homodimer.

The enzyme catalyses (6R)-5,10-methylene-5,6,7,8-tetrahydrofolate + NADP(+) = (6R)-5,10-methenyltetrahydrofolate + NADPH. The catalysed reaction is (6R)-5,10-methenyltetrahydrofolate + H2O = (6R)-10-formyltetrahydrofolate + H(+). It functions in the pathway one-carbon metabolism; tetrahydrofolate interconversion. In terms of biological role, catalyzes the oxidation of 5,10-methylenetetrahydrofolate to 5,10-methenyltetrahydrofolate and then the hydrolysis of 5,10-methenyltetrahydrofolate to 10-formyltetrahydrofolate. This Escherichia coli (strain SMS-3-5 / SECEC) protein is Bifunctional protein FolD.